A 170-amino-acid chain; its full sequence is uncharacterized protein (170 aa).

The first 28 residues, 1–28 (MTGGVMSQKFVVGAGLLVCSVCSLSAMA), serve as a signal peptide directing secretion.

Belongs to the fimbrial protein family.

Functionally, part of the yfcOPQRSUV fimbrial operon. Could contribute to adhesion to various surfaces in specific environmental niches. Increases adhesion to eukaryotic T24 bladder epithelial cells in the absence of fim genes. This is an uncharacterized protein from Escherichia coli (strain K12).